Consider the following 283-residue polypeptide: Shikimate dehydrogenase (NADP(+)) (283 aa).

Shikimate contacts are provided by residues 19–21 and T66; that span reads SRS. K70 acts as the Proton acceptor in catalysis. NADP(+) is bound at residue E82. Shikimate-binding residues include N91 and D107. NADP(+) contacts are provided by residues 133-137 and I226; that span reads GAGGA. Y228 contributes to the shikimate binding site. G249 contributes to the NADP(+) binding site.

This sequence belongs to the shikimate dehydrogenase family. As to quaternary structure, homodimer.

It carries out the reaction shikimate + NADP(+) = 3-dehydroshikimate + NADPH + H(+). It participates in metabolic intermediate biosynthesis; chorismate biosynthesis; chorismate from D-erythrose 4-phosphate and phosphoenolpyruvate: step 4/7. Its function is as follows. Involved in the biosynthesis of the chorismate, which leads to the biosynthesis of aromatic amino acids. Catalyzes the reversible NADPH linked reduction of 3-dehydroshikimate (DHSA) to yield shikimate (SA). The protein is Shikimate dehydrogenase (NADP(+)) of Rhodospirillum rubrum (strain ATCC 11170 / ATH 1.1.1 / DSM 467 / LMG 4362 / NCIMB 8255 / S1).